We begin with the raw amino-acid sequence, 394 residues long: Elongation factor Tu (394 aa).

The 195-residue stretch at 10–204 (KPHVNVGTIG…HLDSYIPEPE (195 aa)) folds into the tr-type G domain. Positions 19–26 (GHVDHGKT) are G1. A GTP-binding site is contributed by 19 to 26 (GHVDHGKT). Residue threonine 26 participates in Mg(2+) binding. A G2 region spans residues 60–64 (GITIN). Residues 81 to 84 (DCPG) form a G3 region. GTP contacts are provided by residues 81-85 (DCPGH) and 136-139 (NKCD). The interval 136-139 (NKCD) is G4. Residues 174–176 (SAL) are G5.

This sequence belongs to the TRAFAC class translation factor GTPase superfamily. Classic translation factor GTPase family. EF-Tu/EF-1A subfamily. In terms of assembly, monomer.

The protein resides in the cytoplasm. The catalysed reaction is GTP + H2O = GDP + phosphate + H(+). In terms of biological role, GTP hydrolase that promotes the GTP-dependent binding of aminoacyl-tRNA to the A-site of ribosomes during protein biosynthesis. This is Elongation factor Tu from Cronobacter sakazakii (strain ATCC BAA-894) (Enterobacter sakazakii).